We begin with the raw amino-acid sequence, 72 residues long: Translation initiation factor IF-1 (72 aa).

In terms of domain architecture, S1-like spans 1 to 72 (MAKEDMIEVE…TRGRITYRFK (72 aa)).

Belongs to the IF-1 family. In terms of assembly, component of the 30S ribosomal translation pre-initiation complex which assembles on the 30S ribosome in the order IF-2 and IF-3, IF-1 and N-formylmethionyl-tRNA(fMet); mRNA recruitment can occur at any time during PIC assembly.

Its subcellular location is the cytoplasm. Its function is as follows. One of the essential components for the initiation of protein synthesis. Stabilizes the binding of IF-2 and IF-3 on the 30S subunit to which N-formylmethionyl-tRNA(fMet) subsequently binds. Helps modulate mRNA selection, yielding the 30S pre-initiation complex (PIC). Upon addition of the 50S ribosomal subunit IF-1, IF-2 and IF-3 are released leaving the mature 70S translation initiation complex. The sequence is that of Translation initiation factor IF-1 from Enterococcus faecalis (strain ATCC 700802 / V583).